The sequence spans 601 residues: Nuclear envelope protein ndc1 (601 aa).

The Cytoplasmic segment spans residues 1-34 (MVMLRTSFPSGSRTKAVRYHTLLRPILQQRFLRA). A helical membrane pass occupies residues 35–55 (CFALLCLCCITSYWFSSGPFI). Residues 56-58 (SLS) lie on the Perinuclear space side of the membrane. The chain crosses the membrane as a helical span at residues 59 to 79 (FWFLSLVRGFVCFFFMFPYFV). At 80 to 106 (MLKSRMSTQKVTKQSLGAQLFYDFSPK) the chain is on the cytoplasmic side. Residues 107–127 (SFFLVYLTFAVSVSCLCLFYI) form a helical membrane-spanning segment. At 128–153 (KGHASSIRLQWIASPNAYELPSLNER) the chain is on the perinuclear space side. Residues 154–174 (FVYMTYFSHILILALTVEHLY) traverse the membrane as a helical segment. Residues 175-182 (LQRDSPSR) are Cytoplasmic-facing. A helical membrane pass occupies residues 183-203 (PVINVSFFNYIFQNLGWLIRF). Over 204 to 256 (SFRKSIICCLFTPFSYAILRSYIWRFAALLTSCCRRIAYTKTPPKWPLSLRLL) the chain is Perinuclear space. Residues 257 to 277 (LHSFWMAFIVCLTFQIALLIF) form a helical membrane-spanning segment. Residues 278-601 (RVFLYSGPMI…VLFREYKSNS (324 aa)) are Cytoplasmic-facing.

Belongs to the NDC1 family. Component of the nuclear pore complex (NPC). NPC constitutes the exclusive means of nucleocytoplasmic transport. NPCs allow the passive diffusion of ions and small molecules and the active, nuclear transport receptor-mediated bidirectional transport of macromolecules such as proteins, RNAs, ribonucleoparticles (RNPs), and ribosomal subunits across the nuclear envelope. Due to its 8-fold rotational symmetry, all subunits are present with 8 copies or multiples thereof.

It localises to the nucleus. Its subcellular location is the nuclear pore complex. It is found in the nucleus membrane. The protein localises to the cytoplasm. The protein resides in the cytoskeleton. It localises to the microtubule organizing center. Its subcellular location is the spindle pole body. Its function is as follows. Component of the nuclear pore complex (NPC) and the spindle pole body (SPB), which plays a key role in de novo assembly and insertion of both structures in the nuclear envelope. Involved in the formation of the bipolar mitotic spindle. Anchors the spindle pole body in the nuclear envelope. This Schizosaccharomyces pombe (strain 972 / ATCC 24843) (Fission yeast) protein is Nuclear envelope protein ndc1 (cut11).